Reading from the N-terminus, the 489-residue chain is Cytochrome P450 monooxygenase orf5 (489 aa).

A helical transmembrane segment spans residues 13-35; that stretch reads FVRLLAFHLIGLFVSITVYRLFF. 4 N-linked (GlcNAc...) asparagine glycosylation sites follow: Asn-37, Asn-118, Asn-171, and Asn-345. Cys-428 is a binding site for heme.

The protein belongs to the cytochrome P450 family. Heme serves as cofactor.

It localises to the membrane. The protein operates within mycotoxin biosynthesis. Its function is as follows. Cytochrome P450 monooxygenase; part of the gene cluster that mediates the biosynthesis of brefeldin A (BFA), a protein transport inhibitor that shows antiviral, antifungal, and antitumor properties. The proposed biosynthesis of BFA involves formation of an acyclic polyketide chain that is differentially tailored throughout the backbone. The highly reducing polyketide synthase Bref-PKS is proposed to synthesize the precisely reduced octaketide precursor, which could then be directly offloaded by the thiohydrolase enzyme Bref-TH followed by a cytochrome P450 monooxygenase-mediated formation of the cyclopentane ring and macrocyclization to afford 7-deoxy BFA. Alternatively, the first ring annulation can also occur on the ACP-tethered intermediate before the thiohydrolase release and lactonization. The C7-hydroxylation by another cytochrome P450 monooxygenase is believed to be the final step in the process to obtain the final structure of BFA. In addition to the HRPKS Bref-PKS and the thiohydrolase Bref-TH, the brefeldin A biosynthesis cluster contains 4 cytochrome p450 monooxygenases (called orf3 to orf6), as well a the probable cluster-specific transcription regulator orf8. This is Cytochrome P450 monooxygenase orf5 from Eupenicillium brefeldianum (Penicillium brefeldianum).